The following is a 421-amino-acid chain: 2-deoxystreptamine N-acetyl-D-glucosaminyltransferase (421 aa).

The protein belongs to the glycosyltransferase group 1 family. Glycosyltransferase 4 subfamily.

The enzyme catalyses 2-deoxystreptamine + UDP-N-acetyl-alpha-D-glucosamine = 2'-N-acetylparomamine + UDP + H(+). Its pathway is antibiotic biosynthesis; neomycin biosynthesis. In terms of biological role, glycosyltransferase involved in the biosynthesis of neomycin by mediating conversion of 2-deoxystreptamine (2-DOS) to 2'-N-acetylparomamine using UDP-alpha-D-glucosamine as sugar donor. This chain is 2-deoxystreptamine N-acetyl-D-glucosaminyltransferase (neoD), found in Streptomyces fradiae (Streptomyces roseoflavus).